The primary structure comprises 757 residues: MSENEPAQMIEGRYRIVRNIAEGGMATVYEAIDERLGRTVAIKVMHTQLAKGPHREQFVERFRREANSAASIANPHIVQVYDTGEFNGLDFLVMEYVHGVNLRHEMNAQGTFSVRETLRVVAETLDGLASAHRAGVVHRDIKPENILINDRGHVQITDFGLAKAASQATLSSTGMLLGTAAYLAPEMIENNQATAQGDLYSVGIMAWEMLTGKVPFDSDNPVTLVFKHVHEDVPSVATVCQGIDPSVAAFIAHLTARQVDARPTDGAAAAEELSQLAAKLPLEAWQYRLHAEPIGGDHTDATAAALVGNIAEQAPLTGVPAGAATFKPSVPAFLADDVASNTVDTGGAADVNPPAPPVAPTTALDSSTPADASAPHKTQIMAQSGSETQVLPQAGDAFTRALAFSDEPDVASNGTGPKKQRSKKPLIIVLVIVLVLAAIGGTAGWWWFAGPGSYWSVPKPDDVTCDANASTECSLAGADWATYESTLKALGIPYKTHKEYSDDVAEGKIISSSVNKTKAVVNSRISKRANQELTVVVSKGVRMTTIPKDILDANSANGKDPLNALKKAGFDNVKHDESKDEYSMDTPQGVALTISPDPGTTAKHNDEVTVTLSKGPMPVTMPNIVGKTQDEMQAALGELKLTANVTEQYDDKVEAGQVISASQEAGAQLKWGDSVDVVISKGPEMATIPSGLVGKQESAVTKTLEGLGFEVKTDKVLGGLFGTVRTVKSGDTDLSNGGKIRLRDANGNPTVITLTIV.

The region spanning 14–274 is the Protein kinase domain; it reads YRIVRNIAEG…DGAAAAEELS (261 aa). Residues 20–28 and Lys-43 each bind ATP; that span reads IAEGGMATV. Asp-140 functions as the Proton acceptor in the catalytic mechanism. Positions 344–387 are disordered; it reads DTGGAADVNPPAPPVAPTTALDSSTPADASAPHKTQIMAQSGSE. 3 consecutive PASTA domains span residues 466 to 539, 545 to 614, and 615 to 681; these read DANA…VVSK, TIPK…TLSK, and GPMP…VISK.

Belongs to the protein kinase superfamily. Ser/Thr protein kinase family.

It carries out the reaction L-seryl-[protein] + ATP = O-phospho-L-seryl-[protein] + ADP + H(+). The enzyme catalyses L-threonyl-[protein] + ATP = O-phospho-L-threonyl-[protein] + ADP + H(+). This chain is Probable serine/threonine-protein kinase pknA2 (pknA2), found in Bifidobacterium longum (strain NCC 2705).